We begin with the raw amino-acid sequence, 587 residues long: Integrator complex subunit 14 (587 aa).

Residues 3–113 enclose the VWFA domain; that stretch reads TLIALDASLS…NILQVVVFTD (111 aa). 2 disordered regions span residues 190–211 and 304–331; these read KSSD…KSEL and REKS…DTSN.

This sequence belongs to the Integrator subunit 14 family. As to quaternary structure, belongs to the multiprotein complex Integrator, at least composed of IntS1, IntS2, IntS3, IntS4, omd/IntS5, IntS6, defl/IntS7, IntS8, IntS9, IntS10, IntS11, IntS12, asun/IntS13, IntS14 and IntS15. The core complex associates with protein phosphatase 2A subunits mts/PP2A and Pp2A-29B, to form the Integrator-PP2A (INTAC) complex.

The protein localises to the nucleus. Functionally, component of the integrator complex, a multiprotein complex that terminates RNA polymerase II (Pol II) transcription in the promoter-proximal region of genes. The integrator complex provides a quality checkpoint during transcription elongation by driving premature transcription termination of transcripts that are unfavorably configured for transcriptional elongation: the complex terminates transcription by (1) catalyzing dephosphorylation of the C-terminal domain (CTD) of Pol II subunit Polr2A/Rbp1 and Spt5, and (2) degrading the exiting nascent RNA transcript via endonuclease activity. The integrator complex is also involved in the 3'-end processing of the U7 snRNA, and also the spliceosomal snRNAs U1, U2, U4 and U5. The sequence is that of Integrator complex subunit 14 from Drosophila melanogaster (Fruit fly).